Consider the following 178-residue polypeptide: Large ribosomal subunit protein bL25 (178 aa).

It belongs to the bacterial ribosomal protein bL25 family. CTC subfamily. In terms of assembly, part of the 50S ribosomal subunit; part of the 5S rRNA/L5/L18/L25 subcomplex. Contacts the 5S rRNA. Binds to the 5S rRNA independently of L5 and L18.

Its function is as follows. This is one of the proteins that binds to the 5S RNA in the ribosome where it forms part of the central protuberance. The sequence is that of Large ribosomal subunit protein bL25 from Nitratiruptor sp. (strain SB155-2).